Consider the following 215-residue polypeptide: LexA repressor (215 aa).

Positions 28-48 (RAEIAAELGFSSPNAAEEHLR) form a DNA-binding region, H-T-H motif. Catalysis depends on for autocatalytic cleavage activity residues S133 and K170.

The protein belongs to the peptidase S24 family. As to quaternary structure, homodimer.

The enzyme catalyses Hydrolysis of Ala-|-Gly bond in repressor LexA.. Represses a number of genes involved in the response to DNA damage (SOS response), including recA and lexA. In the presence of single-stranded DNA, RecA interacts with LexA causing an autocatalytic cleavage which disrupts the DNA-binding part of LexA, leading to derepression of the SOS regulon and eventually DNA repair. The polypeptide is LexA repressor (Burkholderia cenocepacia (strain ATCC BAA-245 / DSM 16553 / LMG 16656 / NCTC 13227 / J2315 / CF5610) (Burkholderia cepacia (strain J2315))).